The primary structure comprises 204 residues: Peptide deformylase (204 aa).

Positions 131 and 174 each coordinate Fe cation. Residue Glu-175 is part of the active site. His-178 is a binding site for Fe cation.

This sequence belongs to the polypeptide deformylase family. Fe(2+) serves as cofactor.

It carries out the reaction N-terminal N-formyl-L-methionyl-[peptide] + H2O = N-terminal L-methionyl-[peptide] + formate. Removes the formyl group from the N-terminal Met of newly synthesized proteins. Requires at least a dipeptide for an efficient rate of reaction. N-terminal L-methionine is a prerequisite for activity but the enzyme has broad specificity at other positions. The polypeptide is Peptide deformylase (Streptococcus thermophilus (strain CNRZ 1066)).